We begin with the raw amino-acid sequence, 437 residues long: ATP-dependent protease ATPase subunit HslU (437 aa).

ATP-binding positions include V18, 60 to 65 (GCGKTE), D250, E315, and R387.

This sequence belongs to the ClpX chaperone family. HslU subfamily. In terms of assembly, a double ring-shaped homohexamer of HslV is capped on each side by a ring-shaped HslU homohexamer. The assembly of the HslU/HslV complex is dependent on binding of ATP.

It localises to the cytoplasm. Its function is as follows. ATPase subunit of a proteasome-like degradation complex; this subunit has chaperone activity. The binding of ATP and its subsequent hydrolysis by HslU are essential for unfolding of protein substrates subsequently hydrolyzed by HslV. HslU recognizes the N-terminal part of its protein substrates and unfolds these before they are guided to HslV for hydrolysis. The sequence is that of ATP-dependent protease ATPase subunit HslU from Methylobacterium radiotolerans (strain ATCC 27329 / DSM 1819 / JCM 2831 / NBRC 15690 / NCIMB 10815 / 0-1).